Consider the following 273-residue polypeptide: Progestin and adipoQ receptor family member 4 (273 aa).

The next 5 helical transmembrane spans lie at 52–72 (IYTHGLALLGFLVLVPMTMPW), 79–99 (GWLGGTHCVACLVPPAASVLY), 115–135 (LLALDMCGVCLVNTLGALPII), 185–205 (LLVFGARGVGLGSGAPGSLPC), and 245–265 (LLSVGSILQLHAGVVPDLLWA).

It belongs to the ADIPOR family. In terms of assembly, interacts with CERS2 and CERS5; the interaction regulates CERS2 and CERS5 stabilities and activities and is inhibited in presence of ceramides. Expressed in adipose tissue.

The protein localises to the golgi apparatus membrane. Plays a role in maintaining adipose tissue function through the regulation of ceramide levels. Mediates the stability of ceramide synthetases, CERS2 and CERS5, and their activities. The polypeptide is Progestin and adipoQ receptor family member 4 (Mus musculus (Mouse)).